Reading from the N-terminus, the 70-residue chain is DNA-directed RNA polymerase subunit omega (70 aa).

This sequence belongs to the RNA polymerase subunit omega family. In terms of assembly, the RNAP catalytic core consists of 2 alpha, 1 beta, 1 beta' and 1 omega subunit. When a sigma factor is associated with the core the holoenzyme is formed, which can initiate transcription.

The enzyme catalyses RNA(n) + a ribonucleoside 5'-triphosphate = RNA(n+1) + diphosphate. Functionally, promotes RNA polymerase assembly. Latches the N- and C-terminal regions of the beta' subunit thereby facilitating its interaction with the beta and alpha subunits. This is DNA-directed RNA polymerase subunit omega from Bacillus cytotoxicus (strain DSM 22905 / CIP 110041 / 391-98 / NVH 391-98).